The primary structure comprises 899 residues: Valine--tRNA ligase (899 aa).

The 'HIGH' region signature appears at 58-68 (PNVTGVLHIGH). Residues 544 to 548 (KMSKS) carry the 'KMSKS' region motif. Lys-547 provides a ligand contact to ATP. The stretch at 836-898 (GTRLHNQRQK…NAELIALGLQ (63 aa)) forms a coiled coil.

It belongs to the class-I aminoacyl-tRNA synthetase family. ValS type 1 subfamily. As to quaternary structure, monomer.

Its subcellular location is the cytoplasm. The enzyme catalyses tRNA(Val) + L-valine + ATP = L-valyl-tRNA(Val) + AMP + diphosphate. In terms of biological role, catalyzes the attachment of valine to tRNA(Val). As ValRS can inadvertently accommodate and process structurally similar amino acids such as threonine, to avoid such errors, it has a 'posttransfer' editing activity that hydrolyzes mischarged Thr-tRNA(Val) in a tRNA-dependent manner. In Helicobacter hepaticus (strain ATCC 51449 / 3B1), this protein is Valine--tRNA ligase.